Here is a 195-residue protein sequence, read N- to C-terminus: Small ribosomal subunit protein uS4c (195 aa).

Positions 82 to 143 (MRLDNILFRL…KQRSKALIQN (62 aa)) constitute an S4 RNA-binding domain.

Belongs to the universal ribosomal protein uS4 family. In terms of assembly, part of the 30S ribosomal subunit. Contacts protein S5. The interaction surface between S4 and S5 is involved in control of translational fidelity.

The protein localises to the plastid. The protein resides in the chloroplast. One of the primary rRNA binding proteins, it binds directly to 16S rRNA where it nucleates assembly of the body of the 30S subunit. In terms of biological role, with S5 and S12 plays an important role in translational accuracy. The sequence is that of Small ribosomal subunit protein uS4c (rps4) from Gladiolus murielae (Abyssinian gladiolus).